The sequence spans 571 residues: Potassium-transporting ATPase potassium-binding subunit (571 aa).

A run of 12 helical transmembrane segments spans residues 5 to 25 (GWMQIALYGAVVLALVRPLGG), 64 to 84 (LAYAGAMILFNVAGFVLLYAL), 136 to 156 (GLTHQNFVSAASGMAVAVALI), 179 to 199 (LYVLLPLSTVLALFYVSQGMP), 220 to 240 (VGPVASQVAIKMLGTNGGGFF), 254 to 274 (LSNFLQMLSIFVIGAALTNVF), 285 to 305 (WAILAAMGLLFLAGVTVTYWA), 330 to 350 (FGIAASALFAVITTAASCGAV), 375 to 395 (IIGGVGAGLYGMLVFVVVAIF), 421 to 441 (MLGILCLPLMMLGFTAIATVV), 488 to 508 (LAIGMLVGRFFVKIPVLAIAG), and 527 to 547 (GGLFVGLLVGVVLIIGGLTFF).

Belongs to the KdpA family. As to quaternary structure, the system is composed of three essential subunits: KdpA, KdpB and KdpC.

The protein resides in the cell inner membrane. In terms of biological role, part of the high-affinity ATP-driven potassium transport (or Kdp) system, which catalyzes the hydrolysis of ATP coupled with the electrogenic transport of potassium into the cytoplasm. This subunit binds the periplasmic potassium ions and delivers the ions to the membrane domain of KdpB through an intramembrane tunnel. This is Potassium-transporting ATPase potassium-binding subunit from Methylorubrum extorquens (strain CM4 / NCIMB 13688) (Methylobacterium extorquens).